The sequence spans 194 residues: MISIIIQILLISVSVAMDAFAVSIGKGLTVSRVRVQDAVKSTLWFGGFQMLFPILGYFAASTFSKYVTQFDHWIIFALLVFIGGNMVHEAFEEDEENSKETAQFDWKHMLPLAVACSIDAFAVGVSLAFMFTKAHMAFAILSIGVVTGLFSAAGLHIGRAFGSRWQKPAQIAGGVVLILLGIKVLLEHLGVIAF.

The next 6 membrane-spanning stretches (helical) occupy residues 2 to 22 (ISIIIQILLISVSVAMDAFAV), 43 to 63 (LWFGGFQMLFPILGYFAASTF), 67 to 87 (VTQFDHWIIFALLVFIGGNMV), 111 to 131 (PLAVACSIDAFAVGVSLAFMF), 137 to 157 (AFAILSIGVVTGLFSAAGLHI), and 174 to 194 (GVVLILLGIKVLLEHLGVIAF).

Belongs to the MntP (TC 9.B.29) family.

The protein resides in the cell membrane. Probably functions as a manganese efflux pump. The sequence is that of Putative manganese efflux pump MntP from Bifidobacterium longum (strain DJO10A).